The sequence spans 525 residues: Putative EGF-like domain-containing protein R659 (525 aa).

Positions 1–24 (MGNKWCGIFLTILLLAQMSQTIFG) are cleaved as a signal peptide. 6 N-linked (GlcNAc...) asparagine; by host glycosylation sites follow: asparagine 60, asparagine 77, asparagine 171, asparagine 181, asparagine 268, and asparagine 281. Residues 317 to 359 (LTQGCGNCDSNAECVFVSGSNSIVPKYQCKCKSGYVGNGTHCS) enclose the EGF-like domain. Cystine bridges form between cysteine 321/cysteine 330, cysteine 324/cysteine 345, and cysteine 347/cysteine 358. N-linked (GlcNAc...) asparagine; by host glycosylation is found at asparagine 354 and asparagine 411.

It localises to the secreted. The sequence is that of Putative EGF-like domain-containing protein R659 from Acanthamoeba polyphaga (Amoeba).